The sequence spans 171 residues: Protein-export protein SecB (171 aa).

This sequence belongs to the SecB family. In terms of assembly, homotetramer, a dimer of dimers. One homotetramer interacts with 1 SecA dimer.

Its subcellular location is the cytoplasm. Its function is as follows. One of the proteins required for the normal export of preproteins out of the cell cytoplasm. It is a molecular chaperone that binds to a subset of precursor proteins, maintaining them in a translocation-competent state. It also specifically binds to its receptor SecA. This is Protein-export protein SecB from Jannaschia sp. (strain CCS1).